The chain runs to 422 residues: MDSILVKGNGELRGQIPIAGAKNACLALMPATLLSDEPLTLTNAPRLSDIRTMTQLLQSLGAEVASLQGGQVLALSSHALTDHRADYDIVRKMRASILVLGPMLARDGHAVVSLPGGCAIGARPVDLHLKALEAMGAELDLRDGYIHAKAPAGGLKGARVVFPLVSVGATENALMAATLAKGTTVLENAAREPEIVDLARCLRRMGAQIEGEGSSTITIEGVDRLGGATHPVVTDRIELGTYMLAPAICGGEVELLGGRIELVGAFCEKLDAAGISVEETERGLRVARKNGRVKAVDVMTEPFPGFPTDLQAQMMALLCTAEGTSVLEERIFENRFMHAPELIRMGARIEVHGGTATVTGVEKLRGAPVMATDLRASVSLILAGLAAEGETIVSRVYHLDRGYERVEEKLSACGAQIRRIPG.

Residue 22 to 23 (KN) participates in phosphoenolpyruvate binding. Arg-94 contributes to the UDP-N-acetyl-alpha-D-glucosamine binding site. Cys-118 (proton donor) is an active-site residue. Cys-118 is subject to 2-(S-cysteinyl)pyruvic acid O-phosphothioketal. Residues 123 to 127 (RPVDL), Asp-309, and Ile-331 each bind UDP-N-acetyl-alpha-D-glucosamine.

Belongs to the EPSP synthase family. MurA subfamily.

It is found in the cytoplasm. It catalyses the reaction phosphoenolpyruvate + UDP-N-acetyl-alpha-D-glucosamine = UDP-N-acetyl-3-O-(1-carboxyvinyl)-alpha-D-glucosamine + phosphate. The protein operates within cell wall biogenesis; peptidoglycan biosynthesis. Its function is as follows. Cell wall formation. Adds enolpyruvyl to UDP-N-acetylglucosamine. The chain is UDP-N-acetylglucosamine 1-carboxyvinyltransferase from Cereibacter sphaeroides (strain KD131 / KCTC 12085) (Rhodobacter sphaeroides).